Here is a 433-residue protein sequence, read N- to C-terminus: Enolase (433 aa).

Gln-167 contributes to the (2R)-2-phosphoglycerate binding site. Glu-209 (proton donor) is an active-site residue. Residues Asp-246, Glu-291, and Asp-318 each coordinate Mg(2+). (2R)-2-phosphoglycerate-binding residues include Lys-343, Arg-372, Ser-373, and Lys-394. Lys-343 serves as the catalytic Proton acceptor.

This sequence belongs to the enolase family. In terms of assembly, component of the RNA degradosome, a multiprotein complex involved in RNA processing and mRNA degradation. Requires Mg(2+) as cofactor.

The protein localises to the cytoplasm. It is found in the secreted. The protein resides in the cell surface. It carries out the reaction (2R)-2-phosphoglycerate = phosphoenolpyruvate + H2O. Its pathway is carbohydrate degradation; glycolysis; pyruvate from D-glyceraldehyde 3-phosphate: step 4/5. Catalyzes the reversible conversion of 2-phosphoglycerate (2-PG) into phosphoenolpyruvate (PEP). It is essential for the degradation of carbohydrates via glycolysis. This chain is Enolase, found in Vibrio vulnificus (strain CMCP6).